We begin with the raw amino-acid sequence, 896 residues long: Protein argonaute 9 (896 aa).

Residues 267–380 (PVVDFLLANQ…FPIEFCNLVS (114 aa)) enclose the PAZ domain. The region spanning 550–857 (FLLCILAERK…AAAQMGTVMK (308 aa)) is the Piwi domain.

This sequence belongs to the argonaute family. Ago subfamily. In terms of tissue distribution, expressed in embryonic shoot apex region, pollen and developing ovules.

Its function is as follows. Involved in RNA-mediated post-transcriptional gene silencing (PTGS). Main component of the RNA-induced silencing complex (RISC) that binds to a short guide RNA such as a microRNA (miRNA) or small interfering RNA (siRNA). RISC uses the mature miRNA or siRNA as a guide for slicer-directed cleavage of homologous mRNAs to repress gene expression. Associates preferentially with small RNAs of 24 nucleotide in length with a 5' terminal adenosine. Interacts with 24 nucleotide sRNAs derived from transposable elements (TEs). Required to silence pericentrometric-located TEs in female gametes and their accessory cells. Necessary to inactivate a significant proportion of long terminal repeat retrotransposons (LTRs) in the ovule. Required to specify cell fate in ovule. Involved in the control of female gamete formation by restricting the specification of gametophyte precursors in a dosage-dependent, non-cell-autonomous manner. Targeted by turnip yellows virus (TuYV) protein P0 (via F-box-like domain) for probable proteasome degradation and thereby inactivating AGO9 function in RNA silencing. The protein is Protein argonaute 9 (AGO9) of Arabidopsis thaliana (Mouse-ear cress).